The following is a 169-amino-acid chain: MICOS complex subunit MIC19 (169 aa).

Glycine 2 carries N-myristoyl glycine lipidation. A CHCH domain is found at 123–165; it reads ENVCQDNENEIVRCLQENPGRVLKCAPLTEAFEKCVGEFRQQV. Short sequence motifs (cx9C motif) lie at residues 126-136 and 147-157; these read CQDNENEIVRC and CAPLTEAFEKC. 2 cysteine pairs are disulfide-bonded: cysteine 126/cysteine 157 and cysteine 136/cysteine 147.

It belongs to the MICOS complex subunit Mic19 family. Metazoan Mic19 subfamily. Component of the mitochondrial contact site and cristae organizing system (MICOS) complex.

Its subcellular location is the mitochondrion inner membrane. Functionally, plays a role in maintaining mitochondrial morphology. May act as a component of the MICOS complex, a large protein complex of the mitochondria. The protein is MICOS complex subunit MIC19 of Caenorhabditis elegans.